Reading from the N-terminus, the 448-residue chain is Cysteine--tRNA ligase (448 aa).

Cys-29 contributes to the Zn(2+) binding site. Positions Pro-31 to Asn-41 match the 'HIGH' region motif. Cys-212, His-237, and Glu-241 together coordinate Zn(2+). Positions Lys-269–Ser-273 match the 'KMSKS' region motif. An ATP-binding site is contributed by Lys-272.

This sequence belongs to the class-I aminoacyl-tRNA synthetase family. Monomer. Requires Zn(2+) as cofactor.

The protein resides in the cytoplasm. It carries out the reaction tRNA(Cys) + L-cysteine + ATP = L-cysteinyl-tRNA(Cys) + AMP + diphosphate. This is Cysteine--tRNA ligase from Streptococcus equi subsp. zooepidemicus (strain MGCS10565).